We begin with the raw amino-acid sequence, 647 residues long: Nucleoside triphosphatase I (647 aa).

The Helicase ATP-binding domain occupies 48–212 (FIGLKNLNSM…NNLIGLLRPN (165 aa)). 61 to 68 (WDTGTGKT) contributes to the ATP binding site. Residues 150-153 (DEVH) carry the DEXH box motif. The 164-residue stretch at 378–541 (YIEACRIILN…KINVVFDLLK (164 aa)) folds into the Helicase C-terminal domain. The interval 467–533 (DIIILDMPWN…DIIKNKQGKI (67 aa)) is binding to the cap-specific mRNA (nucleoside-2'-O-)-methyltransferase.

Belongs to the helicase family. NPH I subfamily. Monomer. Interacts (via C-terminus) with RAP94 (via N-terminus). Interacts with the cap-specific mRNA (nucleoside-2'-O-)-methyltransferase.

It localises to the virion. It carries out the reaction a ribonucleoside 5'-triphosphate + H2O = a ribonucleoside 5'-diphosphate + phosphate + H(+). Its function is as follows. DNA-dependent ATPase required for providing the needed energy to achieve the termination of early transcripts. Acts in concert with the RAP94 subunit of the virion RNA polymerase and the capping enzyme/VTF to catalyze release of UUUUUNU-containing nascent RNA from the elongation complex. NPH-I must bind ssDNA in order to exhibit ATPase activity. In Choristoneura fumiferana (Spruce budworm moth), this protein is Nucleoside triphosphatase I (NPH1).